The chain runs to 223 residues: Expansin-B6 (223 aa).

In terms of domain architecture, Expansin-like EG45 spans 16 to 124; sequence GGACGFAVAN…RRVECLYRRT (109 aa). 3 disulfide bridges follow: Cys-19–Cys-46, Cys-49–Cys-119, and Cys-54–Cys-60. In terms of domain architecture, Expansin-like CBD spans 137–218; that stretch reads YYISFVVEYE…NWKPNETYRS (82 aa). N-linked (GlcNAc...) asparagine glycosylation is present at Asn-213.

Belongs to the expansin family. Expansin B subfamily.

The protein resides in the secreted. The protein localises to the cell wall. It is found in the membrane. In terms of biological role, may cause loosening and extension of plant cell walls by disrupting non-covalent bonding between cellulose microfibrils and matrix glucans. The chain is Expansin-B6 from Arabidopsis thaliana (Mouse-ear cress).